The following is a 397-amino-acid chain: MNIHEYQAKALLRSYGAPVSDGRVVLKADEAKSAAGELGGPLWVVKAQIHAGGRGKGKFKEPEAGEKGGVRLAKSVGEAAELAKQMLGRTLVTHQTGPSGKQVNRIYIEEGSDIARELYLALLVDRGTSRISFVVSTEGGMDIEEVAASTPEKIVSFSVDPASGLSDFHGRRVAFALGLEGAQVKQCVQLVKNLYRAFVEKDMEMLEINPLIVMTDGNLKVLDAKVGFDNNALYRQPDIMALRDETEEDPKELAASKFDLNYIALDGEIGCMVNGAGLAMATMDIIKLYGAEPANFLDVGGGATKEKVTEAFKIITSDPNVKGILVNIFGGIMRCDIIAEGIIAAVKEVGLQVPLVVRLEGTNVEKGKEIIANSGLNVIAGDNLSDAAQKIVKAVKG.

One can recognise an ATP-grasp domain in the interval 9 to 254; sequence KALLRSYGAP…ETEEDPKELA (246 aa). Residues Lys-46, 53–55, Glu-109, Ser-112, and Glu-117 each bind ATP; that span reads GRG. Asn-209 and Asp-223 together coordinate Mg(2+). Substrate is bound by residues Asn-274 and 331-333; that span reads GIM.

This sequence belongs to the succinate/malate CoA ligase beta subunit family. Heterotetramer of two alpha and two beta subunits. Mg(2+) serves as cofactor.

It catalyses the reaction succinate + ATP + CoA = succinyl-CoA + ADP + phosphate. The enzyme catalyses GTP + succinate + CoA = succinyl-CoA + GDP + phosphate. Its pathway is carbohydrate metabolism; tricarboxylic acid cycle; succinate from succinyl-CoA (ligase route): step 1/1. Succinyl-CoA synthetase functions in the citric acid cycle (TCA), coupling the hydrolysis of succinyl-CoA to the synthesis of either ATP or GTP and thus represents the only step of substrate-level phosphorylation in the TCA. The beta subunit provides nucleotide specificity of the enzyme and binds the substrate succinate, while the binding sites for coenzyme A and phosphate are found in the alpha subunit. The protein is Succinate--CoA ligase [ADP-forming] subunit beta of Cereibacter sphaeroides (strain ATCC 17025 / ATH 2.4.3) (Rhodobacter sphaeroides).